Reading from the N-terminus, the 127-residue chain is Succinate dehydrogenase cytochrome b560 subunit (127 aa).

The next 2 membrane-spanning stretches (helical) occupy residues 36 to 53 and 60 to 83; these read VGLAFFFTTFLIFIRIIL and NLLTLISFEISQWIIIYFNLFILL. Position 88 (H88) interacts with heme. Residues 109-126 form a helical membrane-spanning segment; that stretch reads LSKFSLFLLVSLSLILIF.

It belongs to the cytochrome b560 family. As to quaternary structure, forms part of complex II containing four subunits: a 70 kDa flavoprotein (FP), a 27 kDa iron-sulfur protein (IP), a cytochrome B and a membrane-anchoring protein. It depends on heme as a cofactor.

The protein resides in the mitochondrion inner membrane. It participates in carbohydrate metabolism; tricarboxylic acid cycle. Membrane-anchoring subunit of succinate dehydrogenase (SDH) that is involved in complex II of the mitochondrial electron transport chain and is responsible for transferring electrons from succinate to ubiquinone (coenzyme Q). This Chondrus crispus (Carrageen Irish moss) protein is Succinate dehydrogenase cytochrome b560 subunit (SDH3).